The sequence spans 421 residues: NADP(+)-dependent glutamate dehydrogenase (421 aa).

The substrate site is built by lysine 70 and lysine 94. The active-site Proton donor is the lysine 106. Threonine 190 and asparagine 221 together coordinate NADP(+). Serine 354 is a substrate binding site.

This sequence belongs to the Glu/Leu/Phe/Val dehydrogenases family. As to quaternary structure, homohexamer.

It catalyses the reaction L-glutamate + NADP(+) + H2O = 2-oxoglutarate + NH4(+) + NADPH + H(+). Its activity is regulated as follows. Is not regulated allosterically. Activity is inhibited in the presence of high ionic strength; the inhibitory effect of KCl is slightly higher than that of NaCl. Functionally, catalyzes the reversible oxidative deamination of L-glutamate to 2-oxoglutarate and ammonia, thereby playing a key role at the intersection of the carbon and nitrogen metabolic pathways. Shows a high preference for NADP(+)/NADPH as the acceptor/donor over NAD(+)/NADH. May function in vivo in the synthetic direction. Also catalyzes at very low rates the oxidative deamination of L-2-aminobutyrate, and the reductive amination of 2-oxovalerate and 2-oxobutyrate. The chain is NADP(+)-dependent glutamate dehydrogenase from Pyrobaculum calidifontis (strain DSM 21063 / JCM 11548 / VA1).